The primary structure comprises 607 residues: MPRIHVLPPGLVNQIAAGEVVERPASIVKELVENALDAGATSVGVDVEEGGLALVRVADDGSGMDRDDALLALERHATSKLRDAEGLAAIGTMGFRGEAVPAIASVSRFRLDTSAGEDGAGTRVEIEGGVLGEVAPVARPRGTTVEVRDLFFNTPARRKFMRAASTEAGHVSEAVIRLALARPDVGFTLRSGGRLVLGARAGGGLADRAGQALGREAHRHLLPVDARRGEVRVHGLICSPDHSEATGRALYLFVNGRYVRDRAAAHAVLRAFAGTLPPGRHPAGVLFVELPLHRVDVNVHPQKLEVRFAEGREVFDALFHTVAGALRTAPWLRARPQPGDGVPVGDGGGPAPVPVAGEEAAEVLAWARAARPPEGSGATLVQPAPGAWATGRLAFPVVPAPGAGPEAGPRPEGYFAGLRYVGQHARTYLLCEAPGGTLVVIDQHASHERMLFHRLREAFRARRIPVQPFLLPQVVTLPPAAARALEAGLAELGRLGFDAEPFGGEAFAVKGAPAALAGVDLTALLTDLGSQLAEVERGSAVDDAFHDLLATMACHAAVRANQDVSPEEARALLDGLDAIDFKARCPHGRPVVFELSLADLERRVGRR.

It belongs to the DNA mismatch repair MutL/HexB family.

In terms of biological role, this protein is involved in the repair of mismatches in DNA. It is required for dam-dependent methyl-directed DNA mismatch repair. May act as a 'molecular matchmaker', a protein that promotes the formation of a stable complex between two or more DNA-binding proteins in an ATP-dependent manner without itself being part of a final effector complex. The sequence is that of DNA mismatch repair protein MutL from Anaeromyxobacter sp. (strain K).